Reading from the N-terminus, the 152-residue chain is MSQLCPCGSAVEYSLCCHPYVSGEKVAPDPEHLMRSRYCAFVMQDADYLIKTWHPSCGAAALRAELMAGFAHTEWLGLTVFEHCWQDADNIGFVSFVARFTEGGKTGAIIERSRFLKENGQWYYIDGTRPQFGRNDPCPCGSGKKFKKCCGQ.

The protein belongs to the UPF0225 family.

The polypeptide is UPF0225 protein YchJ (Shigella boydii serotype 18 (strain CDC 3083-94 / BS512)).